The primary structure comprises 154 residues: Sperm microtubule associated protein 1 (154 aa).

The polypeptide is Sperm microtubule associated protein 1 (Homo sapiens (Human)).